A 207-amino-acid chain; its full sequence is Small ribosomal subunit protein uS4 (207 aa).

The tract at residues 31–53 (KAKFDSKPGQHGRTSGARTSDFG) is disordered. One can recognise an S4 RNA-binding domain in the interval 97 to 160 (SRLDNVVYRM…KKQNRIVEAL (64 aa)).

It belongs to the universal ribosomal protein uS4 family. Part of the 30S ribosomal subunit. Contacts protein S5. The interaction surface between S4 and S5 is involved in control of translational fidelity.

Functionally, one of the primary rRNA binding proteins, it binds directly to 16S rRNA where it nucleates assembly of the body of the 30S subunit. In terms of biological role, with S5 and S12 plays an important role in translational accuracy. This chain is Small ribosomal subunit protein uS4, found in Albidiferax ferrireducens (strain ATCC BAA-621 / DSM 15236 / T118) (Rhodoferax ferrireducens).